Here is a 455-residue protein sequence, read N- to C-terminus: Ammonium transporter Rh type B (455 aa).

The Cytoplasmic segment spans residues 1–10; the sequence is MARVPRHRRL. A helical membrane pass occupies residues 11-31; it reads VLPLLCLLFQGATALLFAIFV. At 32–58 the chain is on the extracellular side; the sequence is RYNHETDAALWHWGNHSNVDNEFYFRY. An N-linked (GlcNAc...) asparagine glycan is attached at Asn46. Residues 59 to 79 form a helical membrane-spanning segment; the sequence is PSFQDVHVMVFVGFGFLMVFL. Over 80–83 the chain is Cytoplasmic; that stretch reads QRYG. The helical transmembrane segment at 84 to 104 threads the bilayer; sequence FSSVGFTFLVASLTLQWATLL. Topologically, residues 105–121 are extracellular; the sequence is QGFLHSFHGGHIHVGVE. The helical transmembrane segment at 122 to 142 threads the bilayer; it reads SLINADFCAGAVLISFGAVLG. Residues 143–146 are Cytoplasmic-facing; it reads KTGP. A helical transmembrane segment spans residues 147-167; that stretch reads AQLLLMALLEAVLFSVNEFIL. Over 168 to 175 the chain is Extracellular; that stretch reads LSLLGVRD. The helical transmembrane segment at 176–198 threads the bilayer; sequence AGGSMTIHTFGAYFGLFLSWVLY. The Cytoplasmic segment spans residues 199-216; the sequence is RSQLEKSRHRQSSVYNSD. A helical transmembrane segment spans residues 217–237; it reads LFAMIGTIFLWVFWPSFNSAP. The Extracellular portion of the chain corresponds to 238 to 248; that stretch reads TALGDGQHRTV. Residues 249-269 traverse the membrane as a helical segment; that stretch reads VNTYYSLTASTLSTFALSALV. The Cytoplasmic portion of the chain corresponds to 270–279; the sequence is SGDGRLDMVH. A helical membrane pass occupies residues 280 to 300; sequence VQNAALAGGVVVGTSSEMMLT. Residue Pro301 is a topological domain, extracellular. A helical transmembrane segment spans residues 302-322; the sequence is FGALAAGFLAGTVSTLGYKFF. The Cytoplasmic portion of the chain corresponds to 323–343; sequence TPILESRFKLQDTCGVHNLHG. The chain crosses the membrane as a helical span at residues 344 to 364; the sequence is MPGVLGAILGVVVAALATHEA. The Extracellular portion of the chain corresponds to 365 to 390; sequence YGDGLQSVFPLIAKGQRSATSQAVYQ. The chain crosses the membrane as a helical span at residues 391–411; the sequence is LFGMFVTLVFASVGGSLGGLL. Residues 412-455 are Cytoplasmic-facing; that stretch reads LRLPFLDSPPDSQCFEDQVYWEVPGEQETETQRPLRGGESDTRA. Residues 413–421 form an interaction with ANK3 region; sequence RLPFLDSPP. Residues 434–455 form a disordered region; that stretch reads VPGEQETETQRPLRGGESDTRA. The segment covering 441 to 455 has biased composition (basic and acidic residues); sequence ETQRPLRGGESDTRA.

The protein belongs to the ammonium transporter (TC 2.A.49) family. Rh subfamily. Interacts (via C-terminus) with ANK2 and ANK3; required for targeting to the basolateral membrane. In terms of processing, N-glycosylated. In terms of tissue distribution, expressed in kidney by connecting segments and collecting tubules. Also expressed in liver by perivenous hepatocytes. Expressed in the forestomach and the fundus of the stomach. Expressed in duodenum, jejunum, ileum and colon at the level of villous (at protein level). Specifically expressed in kidney where it is restricted to the epithelial linings of the convoluted tubules and the loop of Henle. Also detected in ovary. Expressed by hepatocytes and dermal hair follicles and papillae.

It localises to the cell membrane. It is found in the basolateral cell membrane. The enzyme catalyses NH4(+)(in) = NH4(+)(out). The catalysed reaction is methylamine(out) = methylamine(in). It carries out the reaction CO2(out) = CO2(in). Inhibited by amiloride. Ammonium transporter involved in the maintenance of acid-base homeostasis. Transports ammonium and its related derivative methylammonium across the basolateral plasma membrane of epithelial cells likely contributing to renal transepithelial ammonia transport and ammonia metabolism. May transport either NH4(+) or NH3 ammonia species predominantly mediating an electrogenic NH4(+) transport. May act as a CO2 channel providing for renal acid secretion. This is Ammonium transporter Rh type B (Rhbg) from Mus musculus (Mouse).